The following is a 456-amino-acid chain: Glycine--tRNA ligase (456 aa).

Positions 98 and 168 each coordinate substrate. ATP-binding positions include 200-202, 210-215, 285-286, and 329-332; these read RNE, FRTREF, EL, and GVER. 215 to 219 contacts substrate; that stretch reads FEQME. Residue 325–329 coordinates substrate; that stretch reads EPSVG.

This sequence belongs to the class-II aminoacyl-tRNA synthetase family. In terms of assembly, homodimer.

It is found in the cytoplasm. It carries out the reaction tRNA(Gly) + glycine + ATP = glycyl-tRNA(Gly) + AMP + diphosphate. Catalyzes the attachment of glycine to tRNA(Gly). The chain is Glycine--tRNA ligase from Mycoplasma capricolum subsp. capricolum (strain California kid / ATCC 27343 / NCTC 10154).